A 117-amino-acid polypeptide reads, in one-letter code: Acrylate reductase cytochrome subunit (117 aa).

Residues 1–22 (MKMYKLMLGLVLAGLVSLSAQA) form the signal peptide. His-29, Cys-37, Cys-40, His-41, Cys-54, Cys-57, His-58, His-79, His-83, Cys-90, Cys-93, His-94, His-97, Cys-104, Cys-107, and His-108 together coordinate heme c.

The ArdAB flavocytochrome c is composed of a FAD-containing subunit (ArdA) and a heme c-containing subunit (ArdB). Heme c is required as a cofactor.

It localises to the periplasm. Methacrylate acts as a competitive inhibitor of the acrylate reductase activity and suppresses the reductase activity in dose-dependent manner. In terms of biological role, heme c-containing subunit of the ArdAB flavocytochrome c, which catalyzes the reduction of acrylate to propanoate and supports dimethylsulfoniopropionate-dependent anaerobic respiration. In vitro, can use the artificial electron donor methyl viologen. The natural electron donor is probably a low-potential cytochrome c. Also shows weak activity toward methacrylate in vitro (at a 22-fold lower rate) but cannot use other tested 2-enoates, including crotonic, fumaric, sorbic, urocanic, cinnamic, p-coumaric, caffeic or ferulic acids. The protein catalyzes a unidirectional reaction and cannot oxidize propanoate with phenazine metasulfate and dichlorophenolindophenol as electron acceptors. In Shewanella woodyi (strain ATCC 51908 / MS32), this protein is Acrylate reductase cytochrome subunit.